The following is a 426-amino-acid chain: Enolase (426 aa).

Position 163 (Gln163) interacts with (2R)-2-phosphoglycerate. Catalysis depends on Glu205, which acts as the Proton donor. 3 residues coordinate Mg(2+): Asp242, Glu285, and Asp312. 4 residues coordinate (2R)-2-phosphoglycerate: Lys337, Arg366, Ser367, and Lys388. Lys337 serves as the catalytic Proton acceptor.

The protein belongs to the enolase family. As to quaternary structure, component of the RNA degradosome, a multiprotein complex involved in RNA processing and mRNA degradation. Mg(2+) serves as cofactor.

The protein localises to the cytoplasm. It is found in the secreted. It localises to the cell surface. The catalysed reaction is (2R)-2-phosphoglycerate = phosphoenolpyruvate + H2O. Its pathway is carbohydrate degradation; glycolysis; pyruvate from D-glyceraldehyde 3-phosphate: step 4/5. Catalyzes the reversible conversion of 2-phosphoglycerate (2-PG) into phosphoenolpyruvate (PEP). It is essential for the degradation of carbohydrates via glycolysis. This Nitrosococcus oceani (strain ATCC 19707 / BCRC 17464 / JCM 30415 / NCIMB 11848 / C-107) protein is Enolase.